We begin with the raw amino-acid sequence, 209 residues long: Thiamine-phosphate synthase (209 aa).

Residues 41–45 and N73 each bind 4-amino-2-methyl-5-(diphosphooxymethyl)pyrimidine; that span reads QYRNK. Residues D74 and D93 each coordinate Mg(2+). Residue S112 coordinates 4-amino-2-methyl-5-(diphosphooxymethyl)pyrimidine. Residue 139 to 141 participates in 2-[(2R,5Z)-2-carboxy-4-methylthiazol-5(2H)-ylidene]ethyl phosphate binding; it reads SST. Residue K142 participates in 4-amino-2-methyl-5-(diphosphooxymethyl)pyrimidine binding. G168 lines the 2-[(2R,5Z)-2-carboxy-4-methylthiazol-5(2H)-ylidene]ethyl phosphate pocket.

The protein belongs to the thiamine-phosphate synthase family. Requires Mg(2+) as cofactor.

The catalysed reaction is 2-[(2R,5Z)-2-carboxy-4-methylthiazol-5(2H)-ylidene]ethyl phosphate + 4-amino-2-methyl-5-(diphosphooxymethyl)pyrimidine + 2 H(+) = thiamine phosphate + CO2 + diphosphate. It carries out the reaction 2-(2-carboxy-4-methylthiazol-5-yl)ethyl phosphate + 4-amino-2-methyl-5-(diphosphooxymethyl)pyrimidine + 2 H(+) = thiamine phosphate + CO2 + diphosphate. It catalyses the reaction 4-methyl-5-(2-phosphooxyethyl)-thiazole + 4-amino-2-methyl-5-(diphosphooxymethyl)pyrimidine + H(+) = thiamine phosphate + diphosphate. It functions in the pathway cofactor biosynthesis; thiamine diphosphate biosynthesis; thiamine phosphate from 4-amino-2-methyl-5-diphosphomethylpyrimidine and 4-methyl-5-(2-phosphoethyl)-thiazole: step 1/1. In terms of biological role, condenses 4-methyl-5-(beta-hydroxyethyl)thiazole monophosphate (THZ-P) and 2-methyl-4-amino-5-hydroxymethyl pyrimidine pyrophosphate (HMP-PP) to form thiamine monophosphate (TMP). This Methylobacillus flagellatus (strain ATCC 51484 / DSM 6875 / VKM B-1610 / KT) protein is Thiamine-phosphate synthase.